The primary structure comprises 135 residues: Ribonuclease VapC26 (135 aa).

The PINc domain occupies 1-118 (MIIDTSALLA…TRTILTLDRR (118 aa)). Residues D4 and D97 each coordinate Mg(2+).

This sequence belongs to the PINc/VapC protein family. Mg(2+) serves as cofactor.

Toxic component of a type II toxin-antitoxin (TA) system. An RNase. Upon expression in M.smegmatis inhibits colony formation. Its toxic effect is neutralized by coexpression with cognate antitoxin VapB26. The polypeptide is Ribonuclease VapC26 (Mycobacterium tuberculosis (strain ATCC 25618 / H37Rv)).